A 236-amino-acid chain; its full sequence is N-acetyl-alpha-D-glucosaminyl L-malate deacetylase 1 (236 aa).

H12, D15, and H113 together coordinate Zn(2+).

The protein belongs to the PIGL family. Zn(2+) is required as a cofactor.

The enzyme catalyses (S)-malyl N-acetyl-alpha-D-glucosaminide + H2O = (S)-malyl alpha-D-glucosaminide + acetate. Its function is as follows. Involved in bacillithiol (BSH) biosynthesis. Catalyzes the second step of the pathway, the deacetylation of N-acetylglucosaminylmalate (GlcNAc-Mal) to glucosamine malate (GlcN-Mal). This chain is N-acetyl-alpha-D-glucosaminyl L-malate deacetylase 1, found in Bacillus subtilis (strain 168).